The chain runs to 87 residues: Small ribosomal subunit protein uS17 (87 aa).

The protein belongs to the universal ribosomal protein uS17 family. Part of the 30S ribosomal subunit.

Functionally, one of the primary rRNA binding proteins, it binds specifically to the 5'-end of 16S ribosomal RNA. This chain is Small ribosomal subunit protein uS17, found in Neisseria meningitidis serogroup C (strain 053442).